Reading from the N-terminus, the 533-residue chain is Probable polyamine oxidase 5 (533 aa).

Residues glutamate 37, arginine 45, valine 262, and glutamate 501 each contribute to the FAD site.

Belongs to the flavin monoamine oxidase family. It depends on FAD as a cofactor. In terms of tissue distribution, expressed in root vasculature, leaves and stems.

Its subcellular location is the cytoplasm. It carries out the reaction spermine + O2 + H2O = 3-aminopropanal + spermidine + H2O2. It catalyses the reaction N(1)-acetylspermine + O2 + H2O = 3-acetamidopropanal + spermidine + H2O2. The enzyme catalyses norspermine + O2 + H2O = norspermidine + 3-aminopropanal + H2O2. The catalysed reaction is thermospermine + O2 + H2O = 3-aminopropanal + spermidine + H2O2. The protein operates within amine and polyamine degradation; spermine degradation. Flavoenzyme involved in polyamine back-conversion. Catalyzes the oxidation of the secondary amino group of polyamines, such as spermine and its acetyl derivatives. Substrate preference is spermine &gt; N(1)-acetylspermine &gt; thermospermine &gt; norspermine. Plays an important role in the regulation of polyamine intracellular concentration. Involved in xylem differentiation by controlling thermospermine homeostasis, and participating in the tightly controlled interplay between auxin and cytokinin that is necessary for proper xylem differentiation. Involved in the production of hydrogen peroxide in response to salt and cold stresses. The chain is Probable polyamine oxidase 5 from Arabidopsis thaliana (Mouse-ear cress).